Reading from the N-terminus, the 384-residue chain is Opsin-3 (384 aa).

At M1–A62 the chain is on the extracellular side. N-linked (GlcNAc...) asparagine glycosylation is present at N4. A helical membrane pass occupies residues L63 to F83. Residues S84–N94 lie on the Cytoplasmic side of the membrane. The helical transmembrane segment at M95 to I115 threads the bilayer. The Extracellular segment spans residues M116 to V132. Residues C130 and C207 are joined by a disulfide bond. A helical membrane pass occupies residues Y133–F153. At D154 to Q171 the chain is on the cytoplasmic side. The helical transmembrane segment at A172–F192 threads the bilayer. At R193–E219 the chain is on the extracellular side. The chain crosses the membrane as a helical span at residues V220 to F240. Residues Y241 to K284 are Cytoplasmic-facing. The chain crosses the membrane as a helical span at residues V285 to M305. The Extracellular segment spans residues T306 to R312. The helical transmembrane segment at T313–I333 threads the bilayer. Over D334–A384 the chain is Cytoplasmic.

The protein belongs to the G-protein coupled receptor 1 family. Opsin subfamily. In terms of tissue distribution, in the retina, expression is essentially uniformly distributed but a higher level is seen in the ventral region where the B-cells are localized.

The protein resides in the membrane. In terms of biological role, visual pigments are the light-absorbing molecules that mediate vision. They consist of an apoprotein, opsin, covalently linked to cis-retinal. May play a role in photoperiodic photoreception. This chain is Opsin-3 (OP3), found in Manduca sexta (Tobacco hawkmoth).